The sequence spans 916 residues: Protein O-GlcNAcase (916 aa).

The tract at residues 1–46 (MVQKESQAALEERESERNANPAAASGASLEQSVAPAPGEDNPSGAG) is disordered. A GH84 domain is found at 60-336 (FLCGVVEGFY…TLATWYKSNM (277 aa)). Residues glycine 67, lysine 98, and aspartate 174 each coordinate a protein. Residue aspartate 175 is the Proton donor of the active site. A protein contacts are provided by residues tyrosine 219, 278-280 (WDN), aspartate 285, and asparagine 313. A Phosphoserine modification is found at serine 364. The disordered stretch occupies residues 443–465 (ALSGEPSVLTKEEEKKQPDEEPM). Residues 452–461 (TKEEEKKQPD) show a composition bias toward basic and acidic residues.

The protein belongs to the glycosyl hydrolase 84 family. Monomer. Interacts with CLOCK. Post-translationally, proteolytically cleaved by caspase-3 during apoptosis. The fragments interact with each other; cleavage does not decrease enzyme activity.

It is found in the cytoplasm. The protein localises to the nucleus. It carries out the reaction 3-O-(N-acetyl-beta-D-glucosaminyl)-L-seryl-[protein] + H2O = N-acetyl-D-glucosamine + L-seryl-[protein]. The enzyme catalyses 3-O-(N-acetyl-beta-D-glucosaminyl)-L-threonyl-[protein] + H2O = L-threonyl-[protein] + N-acetyl-D-glucosamine. Its function is as follows. Cleaves GlcNAc but not GalNAc from O-glycosylated proteins. Deglycosylates a large and diverse number of proteins, such as CRYAB, ELK1, GSDMD, LMNB1 and TAB1. Can use p-nitrophenyl-beta-GlcNAc and 4-methylumbelliferone-GlcNAc as substrates but not p-nitrophenyl-beta-GalNAc or p-nitrophenyl-alpha-GlcNAc (in vitro). Does not bind acetyl-CoA and does not have histone acetyltransferase activity. This is Protein O-GlcNAcase from Mus musculus (Mouse).